Consider the following 537-residue polypeptide: MGCVQCKDKEAAKLTEERDGSLNQSSGYRYGTDPTPQHYPSFGVTSIPNYNNFHAAGGQGLTVFGGVNSSSHTGTLRTRGGTGVTLFVALYDYEARTEDDLSFHKGEKFQILNSSEGDWWEARSLTTGETGYIPSNYVAPVDSIQAEEWYFGKLGRKDAERQLLSFGNPRGTFLIRESETTKGAYSLSIRDWDDMKGDHVKHYKIRKLDNGGYYITTRAQFETLQQLVQHYSERAAGLCCRLVVPCHKGMPRLTDLSVKTKDVWEIPRESLQLIKRLGNGQFGEVWMGTWNGNTKVAIKTLKPGTMSPESFLEEAQIMKKLKHDKLVQLYAVVSEEPIYIVTEYMNKGSLLDFLKDGEGRALKLPNLVDMAAQVAAGMAYIERMNYIHRDLRSANILVGNGLICKIADFGLARLIEDNEYTARQGAKFPIKWTAPEAALYGRFTIKSDVWSFGILLTELVTKGRVPYPGMNNREVLEQVERGYRMPCPQDCPISLHELMIHCWKKDPEERPTFEYLQGFLEDYFTATEPQYQPGENL.

Glycine 2 carries N-myristoyl glycine lipidation. Residues cysteine 3 and cysteine 6 are each lipidated (S-palmitoyl cysteine). Residues 14 to 35 are disordered; that stretch reads LTEERDGSLNQSSGYRYGTDPT. 2 positions are modified to phosphoserine: serine 21 and serine 26. In terms of domain architecture, SH3 spans 82 to 143; sequence TGVTLFVALY…PSNYVAPVDS (62 aa). An SH2 domain is found at 149-246; that stretch reads WYFGKLGRKD…GLCCRLVVPC (98 aa). Tyrosine 185 carries the post-translational modification Phosphotyrosine. Positions 271-524 constitute a Protein kinase domain; the sequence is LQLIKRLGNG…YLQGFLEDYF (254 aa). Residues 277 to 285 and lysine 299 contribute to the ATP site; that span reads LGNGQFGEV. Aspartate 390 (proton acceptor) is an active-site residue. Tyrosine 420 is subject to Phosphotyrosine; by autocatalysis. Residue tyrosine 531 is modified to Phosphotyrosine.

It belongs to the protein kinase superfamily. Tyr protein kinase family. SRC subfamily. As to quaternary structure, interacts (via its SH3 domain) with PIK3R1 and PRMT8. Interacts with FYB1, PAG1, and SH2D1A. Interacts with CD79A (tyrosine-phosphorylated form); the interaction increases FYN activity. Interacts (via SH2 domain) with CSF1R (tyrosine phosphorylated). Interacts with TOM1L1 (phosphorylated form). Interacts with KDR (tyrosine phosphorylated). Interacts (via SH3 domain) with KLHL2 (via N-terminus). Interacts with SH2D1A and SLAMF1. Interacts with ITCH; the interaction phosphorylates ITCH and negatively regulates its activity. Interacts with FASLG. Interacts with RUNX3. Interacts with KIT. Interacts with EPHA8; possible downstream effector of EPHA8 in regulation of cell adhesion. Interacts with PTK2/FAK1; this interaction leads to PTK2/FAK1 phosphorylation and activation. Interacts with CAV1; this interaction couples integrins to the Ras-ERK pathway. Interacts with UNC119. Interacts (via SH2 domain) with PTPRH (phosphorylated form). Interacts with PTPRO (phosphorylated form). Interacts with PTPRB (phosphorylated form). Interacts with FYB2. Interacts with DSCAM. Interacts with SKAP1 and FYB1; this interaction promotes the phosphorylation of CLNK. Interacts with NEDD9; in the presence of PTK2. The cofactor is Mn(2+). Autophosphorylated at Tyr-420. Phosphorylation on the C-terminal tail at Tyr-531 by CSK maintains the enzyme in an inactive state. PTPRC/CD45 dephosphorylates Tyr-531 leading to activation. Dephosphorylation at Tyr-420 by PTPN2 negatively regulates T-cell receptor signaling. Phosphorylated at tyrosine residues, which can be enhanced by NTN1. Post-translationally, palmitoylated. Palmitoylation at Cys-3 and Cys-6, probably by ZDHHC21, regulates subcellular location. Detected in spinal cord oligodendrocytes (at protein level).

Its subcellular location is the cytoplasm. The protein localises to the nucleus. It is found in the cell membrane. The protein resides in the perikaryon. The enzyme catalyses L-tyrosyl-[protein] + ATP = O-phospho-L-tyrosyl-[protein] + ADP + H(+). Its activity is regulated as follows. Inhibited by phosphorylation of Tyr-531 by leukocyte common antigen and activated by dephosphorylation of this site. Functionally, non-receptor tyrosine-protein kinase that plays a role in many biological processes including regulation of cell growth and survival, cell adhesion, integrin-mediated signaling, cytoskeletal remodeling, cell motility, immune response and axon guidance. Inactive FYN is phosphorylated on its C-terminal tail within the catalytic domain. Following activation by PKA, the protein subsequently associates with PTK2/FAK1, allowing PTK2/FAK1 phosphorylation, activation and targeting to focal adhesions. Involved in the regulation of cell adhesion and motility through phosphorylation of CTNNB1 (beta-catenin) and CTNND1 (delta-catenin). Regulates cytoskeletal remodeling by phosphorylating several proteins including the actin regulator WAS and the microtubule-associated proteins MAP2 and MAPT. Promotes cell survival by phosphorylating AGAP2/PIKE-A and preventing its apoptotic cleavage. Participates in signal transduction pathways that regulate the integrity of the glomerular slit diaphragm (an essential part of the glomerular filter of the kidney) by phosphorylating several slit diaphragm components including NPHS1, KIRREL1 and TRPC6. Plays a role in neural processes by phosphorylating DPYSL2, a multifunctional adapter protein within the central nervous system, ARHGAP32, a regulator for Rho family GTPases implicated in various neural functions, and SNCA, a small pre-synaptic protein. Involved in reelin signaling by mediating phosphorylation of DAB1 following reelin (RELN)-binding to its receptor. Participates in the downstream signaling pathways that lead to T-cell differentiation and proliferation following T-cell receptor (TCR) stimulation. Phosphorylates PTK2B/PYK2 in response to T-cell receptor activation. Also participates in negative feedback regulation of TCR signaling through phosphorylation of PAG1, thereby promoting interaction between PAG1 and CSK and recruitment of CSK to lipid rafts. CSK maintains LCK and FYN in an inactive form. Promotes CD28-induced phosphorylation of VAV1. In mast cells, phosphorylates CLNK after activation of immunoglobulin epsilon receptor signaling. Can also promote CD244-mediated NK cell activation. This chain is Tyrosine-protein kinase Fyn, found in Rattus norvegicus (Rat).